Here is an 83-residue protein sequence, read N- to C-terminus: Small ribosomal subunit protein uS17 (83 aa).

It belongs to the universal ribosomal protein uS17 family. Part of the 30S ribosomal subunit.

One of the primary rRNA binding proteins, it binds specifically to the 5'-end of 16S ribosomal RNA. The sequence is that of Small ribosomal subunit protein uS17 from Campylobacter curvus (strain 525.92).